An 872-amino-acid polypeptide reads, in one-letter code: DNA mismatch repair protein MutS (872 aa).

602-609 serves as a coordination point for ATP; it reads GPNMSGKS.

Belongs to the DNA mismatch repair MutS family.

This protein is involved in the repair of mismatches in DNA. It is possible that it carries out the mismatch recognition step. This protein has a weak ATPase activity. The polypeptide is DNA mismatch repair protein MutS (Staphylococcus aureus (strain MRSA252)).